The chain runs to 350 residues: tRNA uridine(34) hydroxylase (350 aa).

The 95-residue stretch at 146-240 (DDPDAVFIDM…YARKAREQGL (95 aa)) folds into the Rhodanese domain. The active-site Cysteine persulfide intermediate is Cys200. Residues 314–350 (PEEEQRRRRAGRENGNKIFNKSRGRLNTQLGIPDPAE) are disordered. Basic and acidic residues predominate over residues 316–328 (EEQRRRRAGRENG).

This sequence belongs to the TrhO family.

The catalysed reaction is uridine(34) in tRNA + AH2 + O2 = 5-hydroxyuridine(34) in tRNA + A + H2O. Catalyzes oxygen-dependent 5-hydroxyuridine (ho5U) modification at position 34 in tRNAs. The sequence is that of tRNA uridine(34) hydroxylase from Citrobacter koseri (strain ATCC BAA-895 / CDC 4225-83 / SGSC4696).